A 315-amino-acid polypeptide reads, in one-letter code: Calcium homeostasis modulator protein 4 (315 aa).

At 1–14 (MSPDLNCISSSLLR) the chain is on the cytoplasmic side. A helical transmembrane segment spans residues 15-37 (SEPCINSLIAILTVCGQQLFSSY). The Extracellular segment spans residues 38–48 (TFSCPCQVGKN). Intrachain disulfides connect Cys41-Cys132 and Cys43-Cys163. The chain crosses the membrane as a helical span at residues 49-71 (FYYGSAFLVVPALILLIAGYALR). Residues 72–104 (GQMWTVASEYCCCSCTPPYRRSSPLERRLACLM) are Cytoplasmic-facing. Residues 105–130 (FFDITGRALVAPLTWLTVTLLTGTYY) traverse the membrane as a helical segment. Residues 131–184 (ECAASEFASVDQYPMFANVTPSKREEMLAGFPCYTSAPSDVIPIRDEVALLHRY) are Extracellular-facing. A helical transmembrane segment spans residues 185-208 (QSQMLGWILVVLATIALLLSKCLA). The Cytoplasmic segment spans residues 209 to 315 (RCCSPLTSLQ…DRQEGIEMKP (107 aa)).

Belongs to the CALHM family. As to quaternary structure, oligomerizes to form decameric and undecameric channels. Two hemichannels can assemble in a tail-to-tail manner to form a gap junction.

The protein localises to the cell membrane. May assemble to form gap junction channel-like structures involved in intercellular communication. Channel gating and ion conductance are likely regulated by membrane lipids rather than by membrane depolarization or extracellular calcium levels. This chain is Calcium homeostasis modulator protein 4, found in Mus musculus (Mouse).